Here is an 88-residue protein sequence, read N- to C-terminus: Synaptonemal complex central element protein 3 (88 aa).

The stretch at 7 to 75 forms a coiled coil; sequence EERNYDNMLK…FVNCKEEMEK (69 aa).

Homodimer. Can form higher-order homooligomers. Interacts with SYCP1 (via tetrameric core); the interaction remodels SYCP1 homotetramers to 2:1 heterotrimers with SYCE3. SYCP1/SYCE3 heterotrimers form lattice assemblies as part of the mature synaptonemal complex via both lateral and head-to-head interactions. Interacts with the SYCE1-SIX6OS1 complex; the interaction recruits the SYCE1-SIX6OS1 complex to the central element of the synaptonemal complex. Interacts with the SYCE2-TEX12 complex; the interaction promotes fibrous assembly of SYCE2-TEX12 as part of the synaptonemal complex central element. Interacts with SYCE1. Interacts with SYCE2. Interacts with proteasome subunit PSMA8; to participate in meiosis progression during spermatogenesis. Interacts with SPO16.

It localises to the nucleus. The protein resides in the chromosome. Functionally, major component of the transverse central element of synaptonemal complexes (SCS), formed between homologous chromosomes during meiotic prophase. Required for the assembly of the central element of the synaptonemal complex during meiosis, via remodeling of SYCP1 lattice structures and promoting recruitment of SYCE2-TEX12 and SYCE1-SIX60S1 complexes. Required for chromosome loading of the central element-specific SCS proteins, and for initiating synapsis between homologous chromosomes. Chromosome loading appears to require SYCP1. Required for fertility and normal testis development. The polypeptide is Synaptonemal complex central element protein 3 (Homo sapiens (Human)).